The following is a 133-amino-acid chain: Small ribosomal subunit protein uS11 (133 aa).

The protein belongs to the universal ribosomal protein uS11 family. Part of the 30S ribosomal subunit. Interacts with proteins S7 and S18. Binds to IF-3.

In terms of biological role, located on the platform of the 30S subunit, it bridges several disparate RNA helices of the 16S rRNA. Forms part of the Shine-Dalgarno cleft in the 70S ribosome. The protein is Small ribosomal subunit protein uS11 of Bordetella avium (strain 197N).